A 434-amino-acid chain; its full sequence is Serine--tRNA ligase (434 aa).

Position 239 to 241 (239 to 241) interacts with L-serine; sequence TAE. ATP is bound at residue 270–272; that stretch reads RSE. L-serine is bound at residue glutamate 293. 357-360 contributes to the ATP binding site; sequence EISS. An L-serine-binding site is contributed by serine 393.

The protein belongs to the class-II aminoacyl-tRNA synthetase family. Type-1 seryl-tRNA synthetase subfamily. As to quaternary structure, homodimer. The tRNA molecule binds across the dimer.

The protein resides in the cytoplasm. The enzyme catalyses tRNA(Ser) + L-serine + ATP = L-seryl-tRNA(Ser) + AMP + diphosphate + H(+). It carries out the reaction tRNA(Sec) + L-serine + ATP = L-seryl-tRNA(Sec) + AMP + diphosphate + H(+). Its pathway is aminoacyl-tRNA biosynthesis; selenocysteinyl-tRNA(Sec) biosynthesis; L-seryl-tRNA(Sec) from L-serine and tRNA(Sec): step 1/1. In terms of biological role, catalyzes the attachment of serine to tRNA(Ser). Is also able to aminoacylate tRNA(Sec) with serine, to form the misacylated tRNA L-seryl-tRNA(Sec), which will be further converted into selenocysteinyl-tRNA(Sec). In Pseudoalteromonas translucida (strain TAC 125), this protein is Serine--tRNA ligase.